Here is a 389-residue protein sequence, read N- to C-terminus: Nicotinate phosphoribosyltransferase (389 aa).

Residue His216 is modified to Phosphohistidine; by autocatalysis.

This sequence belongs to the NAPRTase family. Transiently phosphorylated on a His residue during the reaction cycle. Phosphorylation strongly increases the affinity for substrates and increases the rate of nicotinate D-ribonucleotide production. Dephosphorylation regenerates the low-affinity form of the enzyme, leading to product release.

It catalyses the reaction nicotinate + 5-phospho-alpha-D-ribose 1-diphosphate + ATP + H2O = nicotinate beta-D-ribonucleotide + ADP + phosphate + diphosphate. The protein operates within cofactor biosynthesis; NAD(+) biosynthesis; nicotinate D-ribonucleotide from nicotinate: step 1/1. Its function is as follows. Catalyzes the synthesis of beta-nicotinate D-ribonucleotide from nicotinate and 5-phospho-D-ribose 1-phosphate at the expense of ATP. The polypeptide is Nicotinate phosphoribosyltransferase (Ralstonia pickettii (strain 12J)).